Here is a 324-residue protein sequence, read N- to C-terminus: Methenyltetrahydromethanopterin cyclohydrolase (324 aa).

This sequence belongs to the MCH family.

It is found in the cytoplasm. The enzyme catalyses 5,10-methenyl-5,6,7,8-tetrahydromethanopterin + H2O = N(5)-formyl-5,6,7,8-tetrahydromethanopterin + H(+). It participates in one-carbon metabolism; methanogenesis from CO(2); 5,10-methenyl-5,6,7,8-tetrahydromethanopterin from CO(2): step 3/3. Functionally, catalyzes the reversible interconversion of 5-formyl-H(4)MPT to methenyl-H(4)MPT(+). In Methanococcus aeolicus (strain ATCC BAA-1280 / DSM 17508 / OCM 812 / Nankai-3), this protein is Methenyltetrahydromethanopterin cyclohydrolase.